The chain runs to 391 residues: Mannose-6-phosphate isomerase (391 aa).

4 residues coordinate Zn(2+): Gln-97, His-99, Glu-134, and His-255. The active site involves Arg-274. Residue Lys-280 is modified to N6-acetyllysine.

This sequence belongs to the mannose-6-phosphate isomerase type 1 family. Zn(2+) serves as cofactor.

It is found in the cytoplasm. The catalysed reaction is D-mannose 6-phosphate = D-fructose 6-phosphate. In terms of biological role, involved in the conversion of glucose to GDP-L-fucose, which can be converted to L-fucose, a capsular polysaccharide. The protein is Mannose-6-phosphate isomerase (manA) of Shigella flexneri.